The following is a 77-amino-acid chain: Apelin (77 aa).

The signal sequence occupies residues 1 to 22; it reads MNLSFCVQALLLLWLSLTAVCG. A propeptide spanning residues 23-41 is cleaved from the precursor; sequence VPLMLPPDGKGLEEGNMRY. The segment at 45 to 77 is disordered; it reads PRTSRTGPGAWQGGRRKFRRQRPRLSHKGPMPF. Over residues 58–71 the composition is skewed to basic residues; it reads GRRKFRRQRPRLSH.

This sequence belongs to the apelin family. In terms of processing, several active peptides may be produced by proteolytic processing of the peptide precursor. In terms of tissue distribution, expressed in the lung, testis, ovary, uterus and mammary gland. Expressed in neurons in the thalamic paraventricular and hypothalamic supraoptic nuclei. The lung, testis and uterus mainly contain a large form that looks like apelin-36, whereas the mammary gland seems to contain 2 forms of apelin, a large form close to apelin-36 and a small form close to apelin-13 (at protein level). Widely expressed in the adult, with highest levels in the mammary gland of lactating animals, very high levels in the lung, intermediate levels in the spinal cord, ovary, adipose tissue, brain (neuronal cell bodies and fibers in the supraoptic and the paraventricular nuclei), heart and testis, and lowest levels in the pituitary gland, kidney, stomach, uterus and pancreas.

Its subcellular location is the secreted. The protein localises to the extracellular space. Peptide hormone that functions as endogenous ligand for the G-protein-coupled apelin receptor (APLNR/APJ), that plays a role in cadiovascular homeostasis. Functions as a balanced agonist activating both G(i) protein pathway and beta-arrestin pathway of APLNR. Downstream G proteins activation, apelin can inhibit cAMP production and activate key intracellular effectors such as ERKs. On the other hand, APLNR activation induces beta-arrestin recruitment to the membrane leading to desensitization and internalization of the receptor. Apelin blunts cardiac hypertrophic induction from APLNR on response to pathological stimuli, but also induces myocardial hypertrophy under normal conditions. Apelin-36 dissociates more hardly than (pyroglu)apelin-13 from APLNR. Involved in the regulation of cardiac precursor cell movements during gastrulation and heart morphogenesis. Has an inhibitory effect on cytokine production in response to T-cell receptor/CD3 cross-linking; the oral intake of apelin in the colostrum and the milk might therefore modulate immune responses in neonates. Plays a role in early coronary blood vessels formation. Mediates myocardial contractility in an ERK1/2-dependent manner. May also have a role in the central control of body fluid homeostasis by influencing vasopressin release and drinking behavior. The polypeptide is Apelin (Rattus norvegicus (Rat)).